A 555-amino-acid chain; its full sequence is Serine/threonine-protein kinase AGC1-7 (555 aa).

A disordered region spans residues 1-126; sequence MLTKPGKKLD…PSKPHTGGDI (126 aa). Basic and acidic residues-rich tracts occupy residues 7 to 16 and 35 to 54; these read KKLDSSESTH and PRKE…DNLI. The span at 84–118 shows a compositional bias: low complexity; the sequence is SQSNLNTKPNNNNSNNNSNMSSRSNSIESTSSNPS. A Protein kinase domain is found at 146 to 480; sequence FRLLKRLGYG…ATEIKQHPFF (335 aa). ATP contacts are provided by residues 152 to 160 and lysine 175; that span reads LGYGDIGSV. Catalysis depends on aspartate 271, which acts as the Proton acceptor. Residues 481 to 555 form the AGC-kinase C-terminal domain; the sequence is EGVNWALIRS…DPDYIDFEYF (75 aa). Positions 514–547 are disordered; it reads AAVDGGGKKNNNGAGGGCSTGGGDNKPNGDCNDP. Over residues 526 to 537 the composition is skewed to gly residues; the sequence is GAGGGCSTGGGD.

It belongs to the protein kinase superfamily. AGC Ser/Thr protein kinase family. In terms of assembly, interacts with PDPK1/PDK1. In terms of processing, autophosphorylated and phosphorylated by PDPK1/PDK1. As to expression, specifically expressed in pollen grains.

The protein resides in the cytoplasm. The catalysed reaction is L-seryl-[protein] + ATP = O-phospho-L-seryl-[protein] + ADP + H(+). The enzyme catalyses L-threonyl-[protein] + ATP = O-phospho-L-threonyl-[protein] + ADP + H(+). Activated by PDPK1/PDK1. Its function is as follows. Functions redudantly with AGC1-5 as signaling component in the pollen tube. Required for polarized growth of pollen tubes. This is Serine/threonine-protein kinase AGC1-7 from Arabidopsis thaliana (Mouse-ear cress).